Here is a 395-residue protein sequence, read N- to C-terminus: Phosphopentomutase (395 aa).

Mn(2+)-binding residues include Asp-14, Asp-286, His-291, Asp-327, His-328, and His-339.

This sequence belongs to the phosphopentomutase family. Requires Mn(2+) as cofactor.

It localises to the cytoplasm. It carries out the reaction 2-deoxy-alpha-D-ribose 1-phosphate = 2-deoxy-D-ribose 5-phosphate. It catalyses the reaction alpha-D-ribose 1-phosphate = D-ribose 5-phosphate. It functions in the pathway carbohydrate degradation; 2-deoxy-D-ribose 1-phosphate degradation; D-glyceraldehyde 3-phosphate and acetaldehyde from 2-deoxy-alpha-D-ribose 1-phosphate: step 1/2. Its function is as follows. Isomerase that catalyzes the conversion of deoxy-ribose 1-phosphate (dRib-1-P) and ribose 1-phosphate (Rib-1-P) to deoxy-ribose 5-phosphate (dRib-5-P) and ribose 5-phosphate (Rib-5-P), respectively. This Staphylococcus saprophyticus subsp. saprophyticus (strain ATCC 15305 / DSM 20229 / NCIMB 8711 / NCTC 7292 / S-41) protein is Phosphopentomutase.